Consider the following 687-residue polypeptide: UvrABC system protein C (687 aa).

The GIY-YIG domain occupies 16-95; it reads TEPGVYKFRD…IKKFDPHFNV (80 aa). One can recognise a UVR domain in the interval 208-243; that stretch reads DSVVRRLTNEMISASEALDFEKAARKRDDLNAVRKI.

The protein belongs to the UvrC family. In terms of assembly, interacts with UvrB in an incision complex.

Its subcellular location is the cytoplasm. In terms of biological role, the UvrABC repair system catalyzes the recognition and processing of DNA lesions. UvrC both incises the 5' and 3' sides of the lesion. The N-terminal half is responsible for the 3' incision and the C-terminal half is responsible for the 5' incision. This Corynebacterium diphtheriae (strain ATCC 700971 / NCTC 13129 / Biotype gravis) protein is UvrABC system protein C.